The sequence spans 575 residues: MDASAVRKRAAELPAEPGVYQFEAGESVLYVGKAVDLRERVRSYVAPRSDRIRRMVEAAAAVDFAVTDTETQALLLEANLIKRHQPRYNVRLKDDKSYPLVQLTAHEAPRIEITRTPDEAATVFGPYTDKSRVETVVKALRETYELRGCSDHKYEGRDRPCLDYELGLCSAPCTGEIDTDAYAEDVESARRFFDGETGVLAEPLRREMETAAASQAFERAASLRDRLEAVETFHEGGSEAVSGRGGRRLDVLGVAVEGESATVARLRSEDGKLVERDRHRVDAPADAESVPSVLAAFIPQFYAERSLPDVLLLSERYDDEELDQWLHAEGVDIRVPGAGRAATLVELALKNARRTTAEADGPTALARRLGIDRPERIEGFDVSHAGGKDAVGSNVVFVDGSPETADYRRRSLDDENDDYANMRRLVRWRATRAVEGRDDRPTPDLLLIDGGDGQLGAAQDALAETGWDVPAIALAKADELVVTSDGVADWDDGPALRLLQRVRDEAHRFAVQYHQQVRDAVSTPLDSVPGVGPELRERLLKRFGTVDGVRSASREELERVDGVGEDTAAAIDAAL.

The GIY-YIG domain occupies 15-90; sequence AEPGVYQFEA…IKRHQPRYNV (76 aa). A UVR domain is found at 198 to 233; the sequence is GVLAEPLRREMETAAASQAFERAASLRDRLEAVETF.

This sequence belongs to the UvrC family. Interacts with UvrB in an incision complex.

The protein resides in the cytoplasm. The UvrABC repair system catalyzes the recognition and processing of DNA lesions. UvrC both incises the 5' and 3' sides of the lesion. The N-terminal half is responsible for the 3' incision and the C-terminal half is responsible for the 5' incision. The chain is UvrABC system protein C from Natronomonas pharaonis (strain ATCC 35678 / DSM 2160 / CIP 103997 / JCM 8858 / NBRC 14720 / NCIMB 2260 / Gabara) (Halobacterium pharaonis).